The sequence spans 425 residues: O-methyltransferase AMT9 (425 aa).

Residues 257-258, D280, 306-307, R322, and R323 each bind S-adenosyl-L-methionine; these read GG and DF. H326 functions as the Proton acceptor in the catalytic mechanism.

It belongs to the class I-like SAM-binding methyltransferase superfamily. Cation-independent O-methyltransferase family.

It participates in mycotoxin biosynthesis. Functionally, O-methyltransferase; part of the gene clusters that mediate the biosynthesis of AM-toxins, host-selective toxins (HSTs) causing Alternaria blotch on apple, a worldwide distributed disease. AM-toxins are cyclic depsipeptides containing the 3 residues 2-hydroxy-isovaleric acid (2-HIV), dehydroalanine, L-alanine which are common for all 3 AM-toxins I to III. The fourth precursor is L-alpha-amino-methoxyphenyl-valeric acid (L-Amv) for AM-toxin I, L-alpha-amino-phenyl-valeric acid (L-Apv) for AM-toxin II, and L-alpha-amino-hydroxyphenyl-valeric acid (L-Ahv) for AM-toxin III. AM-toxins have two target sites for affecting susceptible apple cells; they cause invagination of the plasma membrane and electrolyte loss and chloroplast disorganization. The non-ribosomal peptide synthetase AMT1 contains 4 catalytic modules and is responsible for activation of each residue in AM-toxin. The aldo-keto reductase AMT2 catalyzes the conversion of 2-keto-isovaleric acid (2-KIV) to 2-hydroxy-isovaleric acid (2-HIV), one of the precursor residues incorporated by AMT1 during AM-toxin biosynthesis, by reduction of its ketone to an alcohol. The cytochrome P450 monooxygenase AMT3 and the thioesterase AMT4 are also important for AM-toxin production, but their exact function within the AM-toxin biosynthesis are not known yet. Up to 21 proteins (including AMT1 to AMT4) are predicted to be involved in AM-toxin biosynthesis since their expression ishighly up-regulated in AM-toxin-producing cultures. The protein is O-methyltransferase AMT9 of Alternaria alternata (Alternaria rot fungus).